The chain runs to 447 residues: GTPase Der (447 aa).

2 EngA-type G domains span residues 4 to 165 (QIIT…PEEE) and 180 to 357 (LQIV…KIWN). Residues 10–17 (GRPNVGKS), 57–61 (DTPGL), 119–122 (NKCE), 186–193 (GRPNAGKS), 233–237 (DTAGL), and 298–301 (NKWD) contribute to the GTP site. Positions 358 to 443 (KKITTSKLNE…PIRFIYVKTK (86 aa)) constitute a KH-like domain.

It belongs to the TRAFAC class TrmE-Era-EngA-EngB-Septin-like GTPase superfamily. EngA (Der) GTPase family. In terms of assembly, associates with the 50S ribosomal subunit.

Its function is as follows. GTPase that plays an essential role in the late steps of ribosome biogenesis. This is GTPase Der from Rickettsia africae (strain ESF-5).